The primary structure comprises 187 residues: Ribosome-recycling factor (187 aa).

Belongs to the RRF family.

It is found in the cytoplasm. Responsible for the release of ribosomes from messenger RNA at the termination of protein biosynthesis. May increase the efficiency of translation by recycling ribosomes from one round of translation to another. The polypeptide is Ribosome-recycling factor (Xanthobacter autotrophicus (strain ATCC BAA-1158 / Py2)).